We begin with the raw amino-acid sequence, 495 residues long: ATP-NADH kinase YEF1 (495 aa).

A disordered region spans residues 442–480; sequence KYRLDSSKNGNDTISNPLESSCISSDAQDEERKSVTETE. A compositionally biased stretch (polar residues) spans 448–467; that stretch reads SKNGNDTISNPLESSCISSD.

This sequence belongs to the NAD kinase family. As to quaternary structure, homooctamer. Mg(2+) serves as cofactor. The cofactor is Mn(2+). It depends on Co(2+) as a cofactor. Ca(2+) is required as a cofactor.

It catalyses the reaction NADH + ATP = ADP + NADPH + H(+). Functionally, ATP-NADH kinase with a low phosphorylation activity of both NADH and NAD(+) to produce NADP and NADPH by using ATP. UTR1 is responsible for essentially all of the NAD/NADH kinase activity resident in the cytoplasm, whereas POS5 is responsible for all mitochondrial NAD/NADH kinase activity and consequent mitochondrial genome maintenance. YEF1 can substitute for UTR1 when overexpressed. The sequence is that of ATP-NADH kinase YEF1 (YEF1) from Saccharomyces cerevisiae (strain ATCC 204508 / S288c) (Baker's yeast).